The sequence spans 89 residues: Rho beta-crystallin (89 aa).

A substrate-binding site is contributed by histidine 31.

The protein belongs to the aldo/keto reductase family. As to quaternary structure, monomer.

This chain is Rho beta-crystallin, found in Lepidodactylus lugubris (Mourning gecko).